The sequence spans 713 residues: UvrABC system protein B (713 aa).

The region spanning Arg-35 to Arg-421 is the Helicase ATP-binding domain. An ATP-binding site is contributed by Gly-48–Ser-55. The short motif at Tyr-101–Ile-124 is the Beta-hairpin element. Residues Gln-438 to Val-604 enclose the Helicase C-terminal domain. Residues Gln-624–Pro-663 are disordered. Residues Gly-639–Ser-649 are compositionally biased toward low complexity. The segment covering Lys-653 to Pro-663 has biased composition (basic and acidic residues). The UVR domain maps to Ala-668–Glu-703.

This sequence belongs to the UvrB family. In terms of assembly, forms a heterotetramer with UvrA during the search for lesions. Interacts with UvrC in an incision complex.

Its subcellular location is the cytoplasm. In terms of biological role, the UvrABC repair system catalyzes the recognition and processing of DNA lesions. A damage recognition complex composed of 2 UvrA and 2 UvrB subunits scans DNA for abnormalities. Upon binding of the UvrA(2)B(2) complex to a putative damaged site, the DNA wraps around one UvrB monomer. DNA wrap is dependent on ATP binding by UvrB and probably causes local melting of the DNA helix, facilitating insertion of UvrB beta-hairpin between the DNA strands. Then UvrB probes one DNA strand for the presence of a lesion. If a lesion is found the UvrA subunits dissociate and the UvrB-DNA preincision complex is formed. This complex is subsequently bound by UvrC and the second UvrB is released. If no lesion is found, the DNA wraps around the other UvrB subunit that will check the other stand for damage. This is UvrABC system protein B from Streptomyces avermitilis (strain ATCC 31267 / DSM 46492 / JCM 5070 / NBRC 14893 / NCIMB 12804 / NRRL 8165 / MA-4680).